The sequence spans 324 residues: Cyclic GMP-AMP synthase CdnE03 (324 aa).

The Mg(2+) site is built by aspartate 87 and aspartate 89. ATP contacts are provided by residues aspartate 89, 144–145 (NK), and aspartate 159. Mg(2+) is bound at residue aspartate 159. GTP is bound by residues lysine 224 and serine 243.

It belongs to the CD-NTase family. E03 subfamily. The cofactor is Mg(2+).

It catalyses the reaction GTP + ATP = 3',2'-cGAMP + 2 diphosphate. Activated by a virus-derived, approximately 400 nucleotide RNA (called CBASS-activating bacteriophage RNA, cabRNA) that begins in the viral terminase subunit terS and extends into terL. RNA secondary and/or tertiary structure, as well as viral infection itself, are important for CdnE activation. A much longer RNA (escaper RNA) with a different secondary structure, derived from a terS-mutated virus still binds to this protein, but does not activate its nucleotide cyclase activity. Shorter viral-derived RNAs (34 and 49 nt) with extensive predicted secondary structure also activate the enzyme, although not as well as full-length cabRNA. Functionally, cyclic nucleotide synthase (second messenger synthase) of a CBASS antivirus system. CBASS (cyclic oligonucleotide-based antiphage signaling system) provides immunity against bacteriophage. The CD-NTase protein synthesizes cyclic nucleotides in response to infection; these serve as specific second messenger signals. The signals activate a diverse range of effectors, leading to bacterial cell death and thus abortive phage infection. The effector for this system is downstream Cap15. A type I-B CBASS system. In terms of biological role, cyclic dinucleotide synthase that catalyzes the synthesis of 3',2'-cyclic GMP-AMP (cGAMP) from GTP and ATP upon activation by viral-derived cabRNA. Binds cabRNA via positive charges in its N-terminus. Its function is as follows. Protects S.aureus against phage infection. When the CBASS operon (cdnE-cap15) is introduced in S.aureus strain RN4220 there is strong protection against lytic DNA phages 80alpha-vir and phi-NM1-gamma-6 but little to no protection against phages phi-NM4-gamma-4 or phi-12-gamma-3. This is Cyclic GMP-AMP synthase CdnE03 from Staphylococcus schleiferi.